Consider the following 127-residue polypeptide: Large ribosomal subunit protein eL8 (127 aa).

The protein belongs to the eukaryotic ribosomal protein eL8 family. In terms of assembly, part of the 50S ribosomal subunit. Probably part of the RNase P complex.

Its subcellular location is the cytoplasm. Multifunctional RNA-binding protein that recognizes the K-turn motif in ribosomal RNA, the RNA component of RNase P, box H/ACA, box C/D and box C'/D' sRNAs. The sequence is that of Large ribosomal subunit protein eL8 from Hyperthermus butylicus (strain DSM 5456 / JCM 9403 / PLM1-5).